Consider the following 469-residue polypeptide: UDP-N-acetylmuramate--L-alanine ligase (469 aa).

122 to 128 lines the ATP pocket; it reads GTHGKTT.

This sequence belongs to the MurCDEF family.

Its subcellular location is the cytoplasm. The enzyme catalyses UDP-N-acetyl-alpha-D-muramate + L-alanine + ATP = UDP-N-acetyl-alpha-D-muramoyl-L-alanine + ADP + phosphate + H(+). It functions in the pathway cell wall biogenesis; peptidoglycan biosynthesis. Its function is as follows. Cell wall formation. In Legionella pneumophila (strain Lens), this protein is UDP-N-acetylmuramate--L-alanine ligase.